The sequence spans 71 residues: uncharacterized protein (71 aa).

This is an uncharacterized protein from Homo sapiens (Human).